A 120-amino-acid polypeptide reads, in one-letter code: Ribonuclease P protein component (120 aa).

It belongs to the RnpA family. As to quaternary structure, consists of a catalytic RNA component (M1 or rnpB) and a protein subunit.

It carries out the reaction Endonucleolytic cleavage of RNA, removing 5'-extranucleotides from tRNA precursor.. Its function is as follows. RNaseP catalyzes the removal of the 5'-leader sequence from pre-tRNA to produce the mature 5'-terminus. It can also cleave other RNA substrates such as 4.5S RNA. The protein component plays an auxiliary but essential role in vivo by binding to the 5'-leader sequence and broadening the substrate specificity of the ribozyme. The sequence is that of Ribonuclease P protein component from Mycobacterium leprae (strain Br4923).